We begin with the raw amino-acid sequence, 159 residues long: Immunogenic protein MPB63 (159 aa).

A signal peptide spans 1–29 (MKLTTMIKTAVAVVAMAAIATFAAPVALA).

It is found in the secreted. The polypeptide is Immunogenic protein MPB63 (mpb63) (Mycobacterium bovis (strain ATCC BAA-935 / AF2122/97)).